The sequence spans 411 residues: Citrate synthase (411 aa).

Residues His304 and Asp363 contribute to the active site.

This sequence belongs to the citrate synthase family.

It carries out the reaction oxaloacetate + acetyl-CoA + H2O = citrate + CoA + H(+). It participates in carbohydrate metabolism; tricarboxylic acid cycle; isocitrate from oxaloacetate: step 1/2. This chain is Citrate synthase (gltA), found in Rickettsia australis.